The chain runs to 479 residues: Ribosomal RNA small subunit methyltransferase F (479 aa).

Residues 125–131 (AAAPGSK), E149, D176, and D194 each bind S-adenosyl-L-methionine. Residue C247 is the Nucleophile of the active site.

This sequence belongs to the class I-like SAM-binding methyltransferase superfamily. RsmB/NOP family.

The protein localises to the cytoplasm. It carries out the reaction cytidine(1407) in 16S rRNA + S-adenosyl-L-methionine = 5-methylcytidine(1407) in 16S rRNA + S-adenosyl-L-homocysteine + H(+). Its function is as follows. Specifically methylates the cytosine at position 1407 (m5C1407) of 16S rRNA. The sequence is that of Ribosomal RNA small subunit methyltransferase F from Shigella boydii serotype 4 (strain Sb227).